Here is an 80-residue protein sequence, read N- to C-terminus: Pigment-dispersing hormone peptides (80 aa).

Positions 1–20 (MANYITIAIIVGIVCGQALS) are cleaved as a signal peptide. A propeptide spanning residues 21 to 58 (VEDVDRNLLELNLPYGRGLDSELQLARLMLAAPRFCHP) is cleaved from the precursor. Ala-78 is modified (alanine amide).

It belongs to the arthropod PDH family. In terms of tissue distribution, expressed in the brain (at protein level).

Its subcellular location is the secreted. In terms of biological role, neuropeptide PDF is the main transmitter regulating circadian locomotor rhythms. The protein is Pigment-dispersing hormone peptides of Camponotus floridanus (Florida carpenter ant).